A 219-amino-acid chain; its full sequence is Cytidylate kinase (219 aa).

Residue 11–19 participates in ATP binding; it reads GTAGSGKTA.

This sequence belongs to the cytidylate kinase family. Type 1 subfamily.

It is found in the cytoplasm. It carries out the reaction CMP + ATP = CDP + ADP. The catalysed reaction is dCMP + ATP = dCDP + ADP. This Mesoplasma florum (strain ATCC 33453 / NBRC 100688 / NCTC 11704 / L1) (Acholeplasma florum) protein is Cytidylate kinase.